The primary structure comprises 371 residues: Carnitine monooxygenase oxygenase subunit (371 aa).

The region spanning 44-152 (WICVAHGSEL…VEEYAGFVFI (109 aa)) is the Rieske domain. 4 residues coordinate [2Fe-2S] cluster: C86, H88, C106, and H109. Fe cation contacts are provided by H208, H213, and D323.

This sequence belongs to the bacterial ring-hydroxylating dioxygenase alpha subunit family. CntA subfamily. As to quaternary structure, composed of an oxygenase subunit and a reductase subunit. [2Fe-2S] cluster is required as a cofactor. Fe cation serves as cofactor.

The enzyme catalyses (R)-carnitine + NADH + O2 + H(+) = (3R)-3-hydroxy-4-oxobutanoate + trimethylamine + NAD(+) + H2O. It carries out the reaction (R)-carnitine + NADPH + O2 + H(+) = (3R)-3-hydroxy-4-oxobutanoate + trimethylamine + NADP(+) + H2O. It functions in the pathway amine and polyamine metabolism; carnitine metabolism. Inhibited by EDTA. Functionally, converts carnitine to trimethylamine and malic semialdehyde. Acts on both enantiomers. In Acinetobacter pittii (strain PHEA-2), this protein is Carnitine monooxygenase oxygenase subunit.